The sequence spans 385 residues: MVHQSEMENYNIGQASIEEVSDPAYKGAKIVVVGVGGGGSNMIKHLVEYGVHQDVTPIATNTDGQHLKNNPAPVKILLGKESTGGLGAGGVPDIGKKAAEESADEIREAIKDAKLVIVSTGLGGGTGTGATPTIVKIAKEVGALTIAIVTKPFKYEGNQKRKRAEEGLKELEQSSDSILVIPNDKILLTMKKNASTTECYREVDDVLVRAVSGISTIITKPGNINVDFADLKSALGFKGFALMGIGEATGEDSAKLAVQNAIQSPLLDDASIEGAKSIIVFFEHHPDYPMMAYSQACDFIQDQAHQDVDVKFGQHTSENIPIDHVRVTIIATGSERNSNGAGLESIATPSQPVVKPTRKVGNGEYLRIPTEEELSIPTTIRIQQD.

GTP-binding positions include 37 to 41 (GGGSN), 125 to 127 (GTG), Glu-156, Lys-160, and Asp-204.

This sequence belongs to the FtsZ family. In terms of assembly, homodimer. Polymerizes to form a dynamic ring structure in a strictly GTP-dependent manner. Interacts directly with several other division proteins.

The protein resides in the cytoplasm. In terms of biological role, essential cell division protein that forms a contractile ring structure (Z ring) at the future cell division site. The regulation of the ring assembly controls the timing and the location of cell division. One of the functions of the FtsZ ring is to recruit other cell division proteins to the septum to produce a new cell wall between the dividing cells. Binds GTP and shows GTPase activity. In Helicobacter pylori (strain J99 / ATCC 700824) (Campylobacter pylori J99), this protein is Cell division protein FtsZ.